Reading from the N-terminus, the 436-residue chain is MERLVIEGGTVLPMTGQADVYENGVVLVEAGRIVYAGPRDGAPHLAGARRIDASGRIVMPGIVNTHCHAAMTLLRGYADDMRLMEWLQTKIWPAEARMTADDVYWGTALGAYEMLSGGITTFLDMYFPADAVARAIQDTGIRGIVARGIIGVGGPSEALSRLDESREAFHRWNGKAGGRITFMVGPHAPYTCPPDALQACAELADELGVGIHIHLSETRDEVEEARRNWGKSPIRHVYDLGLMKGRHVVAAHCVHVDDDDIAILAETGTGVCHCPVSNLKLASGRTPVAKMRRKGVAVGFGTDGASSENMLHILGSEMRIGAIQAKELEGDPAVYTAYDAVAMATIEAARVLGMESEIGSLEPGKKADLILIDAERPHLTPNHDVFALIAYSALPGDVVMTIVDGRIVYEDGRLTTMDGREIMARVREAAARLVRE.

Zn(2+) is bound by residues histidine 66 and histidine 68. Substrate is bound by residues glutamate 95, arginine 147, arginine 161, and histidine 187. Zn(2+) is bound at residue histidine 214. Substrate contacts are provided by glutamate 217 and aspartate 303. Position 303 (aspartate 303) interacts with Zn(2+).

The protein belongs to the metallo-dependent hydrolases superfamily. MTA/SAH deaminase family. Zn(2+) is required as a cofactor.

It carries out the reaction S-adenosyl-L-homocysteine + H2O + H(+) = S-inosyl-L-homocysteine + NH4(+). The catalysed reaction is S-methyl-5'-thioadenosine + H2O + H(+) = S-methyl-5'-thioinosine + NH4(+). Its function is as follows. Catalyzes the deamination of 5-methylthioadenosine and S-adenosyl-L-homocysteine into 5-methylthioinosine and S-inosyl-L-homocysteine, respectively. Is also able to deaminate adenosine. In Symbiobacterium thermophilum (strain DSM 24528 / JCM 14929 / IAM 14863 / T), this protein is 5-methylthioadenosine/S-adenosylhomocysteine deaminase.